We begin with the raw amino-acid sequence, 145 residues long: Putative pre-16S rRNA nuclease (145 aa).

It belongs to the YqgF nuclease family.

It localises to the cytoplasm. Functionally, could be a nuclease involved in processing of the 5'-end of pre-16S rRNA. This is Putative pre-16S rRNA nuclease from Pseudomonas fluorescens.